Consider the following 526-residue polypeptide: GMP synthase [glutamine-hydrolyzing] (526 aa).

The region spanning 3-199 is the Glutamine amidotransferase type-1 domain; that stretch reads KVAIIDFGSQ…FIKIAGCKTD (197 aa). C83 functions as the Nucleophile in the catalytic mechanism. Catalysis depends on residues H174 and E176. Residues 200–392 enclose the GMPS ATP-PPase domain; that stretch reads WTMNSFLDEQ…LGISDEILMR (193 aa). 227–233 contacts ATP; that stretch reads SGGVDSS.

Homodimer.

It catalyses the reaction XMP + L-glutamine + ATP + H2O = GMP + L-glutamate + AMP + diphosphate + 2 H(+). Its pathway is purine metabolism; GMP biosynthesis; GMP from XMP (L-Gln route): step 1/1. Its function is as follows. Catalyzes the synthesis of GMP from XMP. The chain is GMP synthase [glutamine-hydrolyzing] from Ehrlichia canis (strain Jake).